The primary structure comprises 189 residues: MIKAIIGLGNPGEKYKNTRHNVGFMVADLVAKSLNCDRKYREKAFSHIFECPDYDVIIAKPQTYMNLSGNAVLNILKDYKIKPSEILVVYDDLDLPLGAVRLRLKGSSGGHNGIKSIINTIKTEEFPRLKIGIGRPEKKEEVSDYVLSPFTKEEKFLLDKVLAHANECILNVLKYGIEKSMNMCNKNLV.

Tyrosine 15 lines the tRNA pocket. Catalysis depends on histidine 20, which acts as the Proton acceptor. Tyrosine 64, asparagine 66, and asparagine 112 together coordinate tRNA.

Belongs to the PTH family. As to quaternary structure, monomer.

Its subcellular location is the cytoplasm. The catalysed reaction is an N-acyl-L-alpha-aminoacyl-tRNA + H2O = an N-acyl-L-amino acid + a tRNA + H(+). Hydrolyzes ribosome-free peptidyl-tRNAs (with 1 or more amino acids incorporated), which drop off the ribosome during protein synthesis, or as a result of ribosome stalling. In terms of biological role, catalyzes the release of premature peptidyl moieties from peptidyl-tRNA molecules trapped in stalled 50S ribosomal subunits, and thus maintains levels of free tRNAs and 50S ribosomes. The protein is Peptidyl-tRNA hydrolase of Sulfurihydrogenibium sp. (strain YO3AOP1).